A 97-amino-acid polypeptide reads, in one-letter code: Integration host factor subunit alpha (97 aa).

Residues 50-71 form a disordered region; sequence FGNFTLRDKPQRPGRNPKTGEE.

The protein belongs to the bacterial histone-like protein family. Heterodimer of an alpha and a beta chain.

This protein is one of the two subunits of integration host factor, a specific DNA-binding protein that functions in genetic recombination as well as in transcriptional and translational control. This is Integration host factor subunit alpha from Legionella pneumophila (strain Paris).